The sequence spans 125 residues: Large ribosomal subunit protein uL24 (125 aa).

The protein belongs to the universal ribosomal protein uL24 family. As to quaternary structure, part of the 50S ribosomal subunit.

One of two assembly initiator proteins, it binds directly to the 5'-end of the 23S rRNA, where it nucleates assembly of the 50S subunit. Functionally, one of the proteins that surrounds the polypeptide exit tunnel on the outside of the subunit. The sequence is that of Large ribosomal subunit protein uL24 from Mycoplasma mobile (strain ATCC 43663 / 163K / NCTC 11711) (Mesomycoplasma mobile).